Consider the following 162-residue polypeptide: uncharacterized protein (162 aa).

A signal peptide spans methionine 1–serine 19. 2 consecutive transmembrane segments (helical) span residues leucine 53–isoleucine 75 and isoleucine 105–valine 127.

The protein localises to the cell membrane. This is an uncharacterized protein from Treponema pallidum (strain Nichols).